The chain runs to 196 residues: Potassium-transporting ATPase KdpC subunit (196 aa).

A helical transmembrane segment spans residues 7 to 27; the sequence is PAIVSAGLFTVLLGLAYPLAV.

The protein belongs to the KdpC family. As to quaternary structure, the system is composed of three essential subunits: KdpA, KdpB and KdpC.

The protein resides in the cell inner membrane. Functionally, part of the high-affinity ATP-driven potassium transport (or Kdp) system, which catalyzes the hydrolysis of ATP coupled with the electrogenic transport of potassium into the cytoplasm. This subunit acts as a catalytic chaperone that increases the ATP-binding affinity of the ATP-hydrolyzing subunit KdpB by the formation of a transient KdpB/KdpC/ATP ternary complex. The protein is Potassium-transporting ATPase KdpC subunit of Caulobacter sp. (strain K31).